Here is a 57-residue protein sequence, read N- to C-terminus: Large ribosomal subunit protein eL20 (57 aa).

Positions 1-10 (MSEFTVTGTF) are enriched in polar residues. Residues 1-21 (MSEFTVTGTFESRDGNQPFEK) are disordered.

This sequence belongs to the eukaryotic ribosomal protein eL20 family. As to quaternary structure, part of the 50S ribosomal subunit. Binds 23S rRNA.

In Halomicrobium mukohataei (strain ATCC 700874 / DSM 12286 / JCM 9738 / NCIMB 13541) (Haloarcula mukohataei), this protein is Large ribosomal subunit protein eL20.